Here is a 599-residue protein sequence, read N- to C-terminus: Chaperone protein DnaK (599 aa).

Threonine 187 is modified (phosphothreonine; by autocatalysis). Positions alanine 575–asparagine 599 are disordered.

This sequence belongs to the heat shock protein 70 family.

Its function is as follows. Acts as a chaperone. The chain is Chaperone protein DnaK from Mycoplasmopsis pulmonis (strain UAB CTIP) (Mycoplasma pulmonis).